Reading from the N-terminus, the 289-residue chain is Oxaloacetate decarboxylase (289 aa).

A substrate-binding site is contributed by S50. Residue D88 participates in Mg(2+) binding. Substrate-binding residues include R159 and H235.

Belongs to the isocitrate lyase/PEP mutase superfamily. Oxaloacetate decarboxylase family. As to quaternary structure, homotetramer; dimer of dimers. The cofactor is Mg(2+).

The enzyme catalyses oxaloacetate + H(+) = pyruvate + CO2. Its function is as follows. Catalyzes the decarboxylation of oxaloacetate into pyruvate. Seems to play a role in maintaining cellular concentrations of bicarbonate and pyruvate. The chain is Oxaloacetate decarboxylase from Pseudomonas fluorescens (strain ATCC BAA-477 / NRRL B-23932 / Pf-5).